Reading from the N-terminus, the 201-residue chain is FMN-dependent NADH:quinone oxidoreductase (201 aa).

FMN contacts are provided by residues Ser-10, 16–18, 96–99, and 140–143; these read SQS, MYNF, and SRGG.

This sequence belongs to the azoreductase type 1 family. In terms of assembly, homodimer. Requires FMN as cofactor.

The catalysed reaction is 2 a quinone + NADH + H(+) = 2 a 1,4-benzosemiquinone + NAD(+). The enzyme catalyses N,N-dimethyl-1,4-phenylenediamine + anthranilate + 2 NAD(+) = 2-(4-dimethylaminophenyl)diazenylbenzoate + 2 NADH + 2 H(+). In terms of biological role, quinone reductase that provides resistance to thiol-specific stress caused by electrophilic quinones. Functionally, also exhibits azoreductase activity. Catalyzes the reductive cleavage of the azo bond in aromatic azo compounds to the corresponding amines. The protein is FMN-dependent NADH:quinone oxidoreductase of Yersinia pseudotuberculosis serotype O:1b (strain IP 31758).